Consider the following 28-residue polypeptide: Alpha-(1-6)-linked fucose-specific lectin (28 aa).

In terms of assembly, homohexamer. Expressed by mycelium-forming spores.

It is found in the secreted. Functionally, alpha-(1-6)-linked L-fucose specific lectin. The polypeptide is Alpha-(1-6)-linked fucose-specific lectin (Rhizopus stolonifer (Rhizopus nigricans)).